A 580-amino-acid polypeptide reads, in one-letter code: Arginine--tRNA ligase (580 aa).

Residues 123 to 133 (PNIAKEMHVGH) carry the 'HIGH' region motif.

The protein belongs to the class-I aminoacyl-tRNA synthetase family. As to quaternary structure, monomer.

The protein localises to the cytoplasm. The catalysed reaction is tRNA(Arg) + L-arginine + ATP = L-arginyl-tRNA(Arg) + AMP + diphosphate. The polypeptide is Arginine--tRNA ligase (argS) (Buchnera aphidicola subsp. Schizaphis graminum (strain Sg)).